Consider the following 353-residue polypeptide: Photosystem II D2 protein (353 aa).

T2 carries the N-acetylthreonine modification. A Phosphothreonine modification is found at T2. Residues 41 to 61 form a helical membrane-spanning segment; it reads CAYFALGGWFTGTTFVTSWYT. H118 provides a ligand contact to chlorophyll a. The helical transmembrane segment at 125–141 threads the bilayer; that stretch reads GFMLRQFELARPVQLRP. The pheophytin a site is built by Q130 and N143. A helical membrane pass occupies residues 153-166; the sequence is VFLSVFLIYPLGQS. H198 is a binding site for chlorophyll a. A helical membrane pass occupies residues 208–228; that stretch reads AVLLCAIHGATVENTLFEDGD. Positions 215 and 262 each coordinate a plastoquinone. H215 is a binding site for Fe cation. Residue H269 participates in Fe cation binding. The helical transmembrane segment at 279–295 threads the bilayer; that stretch reads GLWMSAIGVVGLALNLR.

The protein belongs to the reaction center PufL/M/PsbA/D family. As to quaternary structure, PSII is composed of 1 copy each of membrane proteins PsbA, PsbB, PsbC, PsbD, PsbE, PsbF, PsbH, PsbI, PsbJ, PsbK, PsbL, PsbM, PsbT, PsbX, PsbY, PsbZ, Psb30/Ycf12, at least 3 peripheral proteins of the oxygen-evolving complex and a large number of cofactors. It forms dimeric complexes. Requires The D1/D2 heterodimer binds P680, chlorophylls that are the primary electron donor of PSII, and subsequent electron acceptors. It shares a non-heme iron and each subunit binds pheophytin, quinone, additional chlorophylls, carotenoids and lipids. There is also a Cl(-1) ion associated with D1 and D2, which is required for oxygen evolution. The PSII complex binds additional chlorophylls, carotenoids and specific lipids. as cofactor. Post-translationally, only phosphorylated in mesophyll cells, phosphorylation increases when cells are grown under high rather than low light regimes (70 vs 900 umol photons/m-2/s).

Its subcellular location is the plastid. It localises to the chloroplast thylakoid membrane. It catalyses the reaction 2 a plastoquinone + 4 hnu + 2 H2O = 2 a plastoquinol + O2. Photosystem II (PSII) is a light-driven water:plastoquinone oxidoreductase that uses light energy to abstract electrons from H(2)O, generating O(2) and a proton gradient subsequently used for ATP formation. It consists of a core antenna complex that captures photons, and an electron transfer chain that converts photonic excitation into a charge separation. The D1/D2 (PsbA/PsbD) reaction center heterodimer binds P680, the primary electron donor of PSII as well as several subsequent electron acceptors. D2 is needed for assembly of a stable PSII complex. The chain is Photosystem II D2 protein from Zea mays (Maize).